We begin with the raw amino-acid sequence, 116 residues long: Large ribosomal subunit protein uL18 (116 aa).

This sequence belongs to the universal ribosomal protein uL18 family. As to quaternary structure, part of the 50S ribosomal subunit; part of the 5S rRNA/L5/L18/L25 subcomplex. Contacts the 5S and 23S rRNAs.

Its function is as follows. This is one of the proteins that bind and probably mediate the attachment of the 5S RNA into the large ribosomal subunit, where it forms part of the central protuberance. The protein is Large ribosomal subunit protein uL18 of Acholeplasma laidlawii (strain PG-8A).